The following is a 215-amino-acid chain: Pyrrolidone-carboxylate peptidase (215 aa).

Active-site residues include E80, C143, and H167.

Belongs to the peptidase C15 family. In terms of assembly, homotetramer.

It localises to the cytoplasm. The catalysed reaction is Release of an N-terminal pyroglutamyl group from a polypeptide, the second amino acid generally not being Pro.. Removes 5-oxoproline from various penultimate amino acid residues except L-proline. This is Pyrrolidone-carboxylate peptidase from Pectobacterium carotovorum subsp. carotovorum (strain PC1).